We begin with the raw amino-acid sequence, 309 residues long: Homoserine O-succinyltransferase (309 aa).

Residue Cys-142 is the Acyl-thioester intermediate of the active site. 2 residues coordinate substrate: Lys-163 and Ser-192. The active-site Proton acceptor is His-235. Glu-237 is an active-site residue. Arg-249 is a binding site for substrate.

This sequence belongs to the MetA family. In terms of assembly, homodimer.

Its subcellular location is the cytoplasm. The enzyme catalyses L-homoserine + succinyl-CoA = O-succinyl-L-homoserine + CoA. It functions in the pathway amino-acid biosynthesis; L-methionine biosynthesis via de novo pathway; O-succinyl-L-homoserine from L-homoserine: step 1/1. Transfers a succinyl group from succinyl-CoA to L-homoserine, forming succinyl-L-homoserine. The polypeptide is Homoserine O-succinyltransferase (Escherichia coli O139:H28 (strain E24377A / ETEC)).